Here is a 358-residue protein sequence, read N- to C-terminus: Alanine racemase (358 aa).

The active-site Proton acceptor; specific for D-alanine is Lys34. Residue Lys34 is modified to N6-(pyridoxal phosphate)lysine. Arg130 serves as a coordination point for substrate. Tyr254 (proton acceptor; specific for L-alanine) is an active-site residue. Met302 provides a ligand contact to substrate.

Belongs to the alanine racemase family. Pyridoxal 5'-phosphate serves as cofactor.

The catalysed reaction is L-alanine = D-alanine. Its pathway is amino-acid biosynthesis; D-alanine biosynthesis; D-alanine from L-alanine: step 1/1. In terms of biological role, catalyzes the interconversion of L-alanine and D-alanine. May also act on other amino acids. In Actinobacillus succinogenes (strain ATCC 55618 / DSM 22257 / CCUG 43843 / 130Z), this protein is Alanine racemase (alr).